Consider the following 356-residue polypeptide: Pyrimidine monooxygenase RutA (356 aa).

Residues 49 to 50 (IK), Asn-115, Glu-124, 140 to 141 (RY), and Ser-190 each bind FMN.

Belongs to the NtaA/SnaA/DszA monooxygenase family. RutA subfamily.

It carries out the reaction uracil + FMNH2 + NADH + O2 = (Z)-3-ureidoacrylate + FMN + NAD(+) + H2O + H(+). It catalyses the reaction thymine + FMNH2 + NADH + O2 = (Z)-2-methylureidoacrylate + FMN + NAD(+) + H2O + H(+). Its function is as follows. Catalyzes the pyrimidine ring opening between N-3 and C-4 by an unusual flavin hydroperoxide-catalyzed mechanism, adding oxygen atoms in the process to yield ureidoacrylate peracid, that immediately reacts with FMN forming ureidoacrylate and FMN-N(5)-oxide. The FMN-N(5)-oxide reacts spontaneously with NADH to produce FMN. Requires the flavin reductase RutF to regenerate FMN in vivo. This is Pyrimidine monooxygenase RutA from Haliangium ochraceum (strain DSM 14365 / JCM 11303 / SMP-2).